An 84-amino-acid chain; its full sequence is Small ribosomal subunit protein uS17 (84 aa).

Belongs to the universal ribosomal protein uS17 family. Part of the 30S ribosomal subunit.

Functionally, one of the primary rRNA binding proteins, it binds specifically to the 5'-end of 16S ribosomal RNA. The sequence is that of Small ribosomal subunit protein uS17 from Serratia proteamaculans (strain 568).